The following is a 118-amino-acid chain: Small ribosomal subunit protein uS13 (118 aa).

Residues 94 to 118 (GLPVRGQRTKTNARTRKGPRKPIKK) form a disordered region.

The protein belongs to the universal ribosomal protein uS13 family. Part of the 30S ribosomal subunit. Forms a loose heterodimer with protein S19. Forms two bridges to the 50S subunit in the 70S ribosome.

In terms of biological role, located at the top of the head of the 30S subunit, it contacts several helices of the 16S rRNA. In the 70S ribosome it contacts the 23S rRNA (bridge B1a) and protein L5 of the 50S subunit (bridge B1b), connecting the 2 subunits; these bridges are implicated in subunit movement. Contacts the tRNAs in the A and P-sites. In Haemophilus ducreyi (strain 35000HP / ATCC 700724), this protein is Small ribosomal subunit protein uS13.